Reading from the N-terminus, the 513-residue chain is ATP synthase subunit alpha (513 aa).

171 to 178 provides a ligand contact to ATP; that stretch reads GDRQIGKT.

The protein belongs to the ATPase alpha/beta chains family. In terms of assembly, F-type ATPases have 2 components, CF(1) - the catalytic core - and CF(0) - the membrane proton channel. CF(1) has five subunits: alpha(3), beta(3), gamma(1), delta(1), epsilon(1). CF(0) has three main subunits: a(1), b(2) and c(9-12). The alpha and beta chains form an alternating ring which encloses part of the gamma chain. CF(1) is attached to CF(0) by a central stalk formed by the gamma and epsilon chains, while a peripheral stalk is formed by the delta and b chains.

Its subcellular location is the cell membrane. It catalyses the reaction ATP + H2O + 4 H(+)(in) = ADP + phosphate + 5 H(+)(out). Produces ATP from ADP in the presence of a proton gradient across the membrane. The alpha chain is a regulatory subunit. The polypeptide is ATP synthase subunit alpha (Wolbachia pipientis wMel).